Reading from the N-terminus, the 536-residue chain is Butyrophilin-like protein 9 (536 aa).

Positions 1-35 (MADFSVFLGFLKQIPRCLSIFFTYLLFLQLWEVNS) are cleaved as a signal peptide. 2 Ig-like V-type domains span residues 36–149 (DKVW…WELE) and 152–241 (GSGS…KEFV). Over 36–257 (DKVWVLGPEE…FLPRMSPWKK (222 aa)) the chain is Extracellular. Cysteines 59 and 133 form a disulfide. 3 N-linked (GlcNAc...) asparagine glycosylation sites follow: Asn-102, Asn-139, and Asn-224. A disulfide bond links Cys-173 and Cys-227. Residues 258–278 (AFVGTLVVLPLSLIVLTMLAL) traverse the membrane as a helical segment. Over 279–536 (RYFYKLRSFQ…PAWAVNEAVS (258 aa)) the chain is Cytoplasmic. One can recognise a B30.2/SPRY domain in the interval 307–506 (DWRRSEGQAE…MTICSLPVRG (200 aa)).

This sequence belongs to the immunoglobulin superfamily. BTN/MOG family.

It localises to the membrane. This Mus musculus (Mouse) protein is Butyrophilin-like protein 9 (Btnl9).